The following is a 79-amino-acid chain: MVLNEEIPRHLLLTQNNDIIPKHHILILPAVDSYQKSVNDLRALTFSKFQELKHAHELRNLCVSQSRFLAIMWFGTNTN.

This is CATR tumorigenic conversion 1 protein (CATR1) from Homo sapiens (Human).